A 303-amino-acid chain; its full sequence is MRPDGIAGFALTIAAPAKINLALHVVGQRADGHHLLESLVTFAECGDGIGLAAAEADHFTVSGRFAPDLSPSAENTSGNLVLRARDVLRRELASQGRAAGPVHLHLEKNLPVASGIGGGSADAAATLRGLLSLWGASLEPARLGSLALELGADVPMCLDGRPLIARGIGEEITSIPDLPSFAIVLVNPLVEVSTPVVFRLLIRKSNPPLVLPENLRSTAAWLAALASMRNDLEPPARALEPMIEAVSTALEDAGATLVRMSGSGATCFGLFADEKSASLAAETISASQPRWYVRATRTAGKSG.

The active site involves lysine 18. 111 to 121 (PVASGIGGGSA) serves as a coordination point for ATP. Residue aspartate 153 is part of the active site.

It belongs to the GHMP kinase family. IspE subfamily.

It carries out the reaction 4-CDP-2-C-methyl-D-erythritol + ATP = 4-CDP-2-C-methyl-D-erythritol 2-phosphate + ADP + H(+). The protein operates within isoprenoid biosynthesis; isopentenyl diphosphate biosynthesis via DXP pathway; isopentenyl diphosphate from 1-deoxy-D-xylulose 5-phosphate: step 3/6. Catalyzes the phosphorylation of the position 2 hydroxy group of 4-diphosphocytidyl-2C-methyl-D-erythritol. The chain is 4-diphosphocytidyl-2-C-methyl-D-erythritol kinase from Sinorhizobium medicae (strain WSM419) (Ensifer medicae).